The sequence spans 643 residues: Protein THEMIS2 (643 aa).

CABIT stretches follow at residues 1-238 and 239-514; these read MEPV…TASS and RHVH…KAKG. Residues 546-631 are disordered; that stretch reads EIQAPPPRPP…RQDLDDDEHD (86 aa). T593 carries the phosphothreonine modification. Residues 609–619 show a composition bias toward basic residues; sequence PAHRKGHRPAK. The residue at position 632 (Y632) is a Phosphotyrosine.

The protein belongs to the themis family. In terms of assembly, interacts with VAV1. Interacts with LAT. Interacts constitutively with GRB2, LYN and PLCG2; these interactions increase the activation of PLCG2 and its downstream pathways following B cell receptor stimulation. In terms of processing, phosphorylation at Tyr-632 is induced by LPS. Phosphorylated by Src kinases (Lck or Fyn) following BCR engagement. As to expression, expressed in different endometrial adenocarcinoma cell lines and various other cell lines apart from the prostate cell line LNCaP and the ovarian cancer cell line BG1.

The protein localises to the nucleus. It localises to the cytoplasm. Functionally, may constitute a control point in macrophage inflammatory response, promoting LPS-induced TLR4-mediated TNF production. Determines the threshold for activation of B cells by low-affinity and low-avidity ligands via PLCG2 activation and its downstream pathways. This Homo sapiens (Human) protein is Protein THEMIS2.